We begin with the raw amino-acid sequence, 638 residues long: Eukaryotic translation initiation factor 2A (638 aa).

2 WD repeats span residues 287-329 and 331-370; these read SKEG…FDFG and GPRNCAYFNPFGNLIALAGFGNLPGAVEVWDVSKREKLAN. The segment covering 441 to 450 has biased composition (basic and acidic residues); sequence KITKAKHEGI. Residues 441–593 are disordered; it reads KITKAKHEGI…SDKERKIRSV (153 aa). Thr463 is modified (phosphothreonine). Over residues 492-501 the composition is skewed to low complexity; sequence AAAGGVNGNK. The span at 583–593 shows a compositional bias: basic and acidic residues; the sequence is ISDKERKIRSV.

It belongs to the WD repeat EIF2A family.

In terms of biological role, functions in the early steps of protein synthesis of a small number of specific mRNAs. Acts by directing the binding of methionyl-tRNAi to 40S ribosomal subunits. In contrast to the eIF-2 complex, it binds methionyl-tRNAi to 40S subunits in a codon-dependent manner, whereas the eIF-2 complex binds methionyl-tRNAi to 40S subunits in a GTP-dependent manner. This chain is Eukaryotic translation initiation factor 2A, found in Drosophila melanogaster (Fruit fly).